Consider the following 218-residue polypeptide: Small ribosomal subunit protein uS3 (218 aa).

In terms of domain architecture, KH type-2 spans 38 to 106 (IREFINQRLS…RVHINILEIK (69 aa)).

The protein belongs to the universal ribosomal protein uS3 family. In terms of assembly, part of the 30S ribosomal subunit. Forms a tight complex with proteins S10 and S14.

In terms of biological role, binds the lower part of the 30S subunit head. Binds mRNA in the 70S ribosome, positioning it for translation. This is Small ribosomal subunit protein uS3 from Bacillus licheniformis (strain ATCC 14580 / DSM 13 / JCM 2505 / CCUG 7422 / NBRC 12200 / NCIMB 9375 / NCTC 10341 / NRRL NRS-1264 / Gibson 46).